The following is a 129-amino-acid chain: Tumor necrosis factor receptor superfamily member 12A (129 aa).

Positions 1-27 are cleaved as a signal peptide; it reads MARGSLRRLLRLLVLGLWLALLRSVAG. Residues 28-80 lie on the Extracellular side of the membrane; that stretch reads EQAPGTAPCSRGSSWSADLDKCMDCASCRARPHSDFCLGCAAAPPAPFRLLWP. 3 disulfide bridges follow: Cys-36/Cys-49, Cys-52/Cys-67, and Cys-55/Cys-64. Residues 36–67 form a TNFR-Cys; atypical repeat; the sequence is CSRGSSWSADLDKCMDCASCRARPHSDFCLGC. The helical transmembrane segment at 81-101 threads the bilayer; that stretch reads ILGGALSLTFVLGLLSGFLVW. Over 102–129 the chain is Cytoplasmic; sequence RRCRRREKFTTPIEETGGEGCPAVALIQ.

In terms of assembly, associates with TRAF1 and TRAF2, and probably also with TRAF3. Highly expressed in heart, placenta and kidney. Intermediate expression in lung, skeletal muscle and pancreas.

The protein resides in the membrane. Its function is as follows. Receptor for TNFSF12/TWEAK. Weak inducer of apoptosis in some cell types. Promotes angiogenesis and the proliferation of endothelial cells. May modulate cellular adhesion to matrix proteins. The sequence is that of Tumor necrosis factor receptor superfamily member 12A (TNFRSF12A) from Homo sapiens (Human).